Here is a 649-residue protein sequence, read N- to C-terminus: DNA mismatch repair protein MutL (649 aa).

The protein belongs to the DNA mismatch repair MutL/HexB family.

Functionally, this protein is involved in the repair of mismatches in DNA. It is required for dam-dependent methyl-directed DNA mismatch repair. May act as a 'molecular matchmaker', a protein that promotes the formation of a stable complex between two or more DNA-binding proteins in an ATP-dependent manner without itself being part of a final effector complex. In Streptococcus pneumoniae serotype 2 (strain D39 / NCTC 7466), this protein is DNA mismatch repair protein MutL.